The sequence spans 341 residues: MAKIYYNDDADLSIIQNRSVAIIGYGSQGHAHALNLRDSGVDVRIGLNEGSKSRAKAEAEGLQVMSIAEAAKEADVIMILTPDQVQAQVYEESIKDNLEEGDAIFFAHGFNIRFGYIEAPQGVDVAMVAPKGPGHTVRREFEAGRGVPDLVAVEVDASGNALQLALSYAKGIGGTRAGVIETTFTEETESDLFGEQAVLCGGMSHLVQYGFEVLTEAGYQPEIAYFEVLHELKLIVDLMVEGGIAKQRWSISDTAEYGDYVSGPRVIDPSVKERMQDVLKDIQEGVFADRFMKDQASGAKEFKELRAKEEKHPIETTGRKLRSLFAWEQTDADYTEGTAAR.

A KARI N-terminal Rossmann domain is found at 2–182 (AKIYYNDDAD…GGTRAGVIET (181 aa)). NADP(+)-binding positions include 25 to 28 (YGSQ), Ser-51, Ser-53, and 83 to 86 (DQVQ). Residue His-108 is part of the active site. An NADP(+)-binding site is contributed by Gly-134. A KARI C-terminal knotted domain is found at 183–328 (TFTEETESDL…RKLRSLFAWE (146 aa)). Asp-191, Glu-195, Glu-227, and Glu-231 together coordinate Mg(2+). Ser-252 lines the substrate pocket.

Belongs to the ketol-acid reductoisomerase family. Requires Mg(2+) as cofactor.

The enzyme catalyses (2R)-2,3-dihydroxy-3-methylbutanoate + NADP(+) = (2S)-2-acetolactate + NADPH + H(+). It carries out the reaction (2R,3R)-2,3-dihydroxy-3-methylpentanoate + NADP(+) = (S)-2-ethyl-2-hydroxy-3-oxobutanoate + NADPH + H(+). The protein operates within amino-acid biosynthesis; L-isoleucine biosynthesis; L-isoleucine from 2-oxobutanoate: step 2/4. Its pathway is amino-acid biosynthesis; L-valine biosynthesis; L-valine from pyruvate: step 2/4. Functionally, involved in the biosynthesis of branched-chain amino acids (BCAA). Catalyzes an alkyl-migration followed by a ketol-acid reduction of (S)-2-acetolactate (S2AL) to yield (R)-2,3-dihydroxy-isovalerate. In the isomerase reaction, S2AL is rearranged via a Mg-dependent methyl migration to produce 3-hydroxy-3-methyl-2-ketobutyrate (HMKB). In the reductase reaction, this 2-ketoacid undergoes a metal-dependent reduction by NADPH to yield (R)-2,3-dihydroxy-isovalerate. This is Ketol-acid reductoisomerase (NADP(+)) from Kocuria rhizophila (strain ATCC 9341 / DSM 348 / NBRC 103217 / DC2201).